The following is a 220-amino-acid chain: Uracil-DNA glycosylase (220 aa).

The active-site Proton acceptor is the Asp-65.

This sequence belongs to the uracil-DNA glycosylase (UDG) superfamily. UNG family.

Its subcellular location is the cytoplasm. It carries out the reaction Hydrolyzes single-stranded DNA or mismatched double-stranded DNA and polynucleotides, releasing free uracil.. Its function is as follows. Excises uracil residues from the DNA which can arise as a result of misincorporation of dUMP residues by DNA polymerase or due to deamination of cytosine. In Amoebophilus asiaticus (strain 5a2), this protein is Uracil-DNA glycosylase.